Reading from the N-terminus, the 151-residue chain is NADPH-dependent 7-cyano-7-deazaguanine reductase (151 aa).

Residue C51 is the Thioimide intermediate of the active site. D58 acts as the Proton donor in catalysis. Residues V73 to S75 and H92 to E93 contribute to the substrate site.

This sequence belongs to the GTP cyclohydrolase I family. QueF type 1 subfamily.

It is found in the cytoplasm. The catalysed reaction is 7-aminomethyl-7-carbaguanine + 2 NADP(+) = 7-cyano-7-deazaguanine + 2 NADPH + 3 H(+). Its pathway is tRNA modification; tRNA-queuosine biosynthesis. Its function is as follows. Catalyzes the NADPH-dependent reduction of 7-cyano-7-deazaguanine (preQ0) to 7-aminomethyl-7-deazaguanine (preQ1). In Bacteroides fragilis (strain ATCC 25285 / DSM 2151 / CCUG 4856 / JCM 11019 / LMG 10263 / NCTC 9343 / Onslow / VPI 2553 / EN-2), this protein is NADPH-dependent 7-cyano-7-deazaguanine reductase.